We begin with the raw amino-acid sequence, 218 residues long: Peptide deformylase (218 aa).

Positions 130 and 172 each coordinate Fe cation. Glu173 is a catalytic residue. His176 lines the Fe cation pocket.

This sequence belongs to the polypeptide deformylase family. It depends on Fe(2+) as a cofactor.

It carries out the reaction N-terminal N-formyl-L-methionyl-[peptide] + H2O = N-terminal L-methionyl-[peptide] + formate. In terms of biological role, removes the formyl group from the N-terminal Met of newly synthesized proteins. Requires at least a dipeptide for an efficient rate of reaction. N-terminal L-methionine is a prerequisite for activity but the enzyme has broad specificity at other positions. This is Peptide deformylase from Bifidobacterium adolescentis (strain ATCC 15703 / DSM 20083 / NCTC 11814 / E194a).